The following is a 391-amino-acid chain: cAMP-dependent protein kinase regulatory subunit (391 aa).

Residues 1–84 (MFKSPFGANA…PPNPESYPAQ (84 aa)) are disordered. Residues 1 to 131 (MFKSPFGANA…RLKTAIAGNF (131 aa)) form a dimerization and phosphorylation region. Residues 38-55 (TVTSPTSPNFGMNAQSMF) show a composition bias toward polar residues. Serine 92 carries the post-translational modification Phosphoserine. Residues 132–261 (LFSH…FLRE), glutamate 210, arginine 219, 264–381 (LLQT…DIKT), glutamate 331, and arginine 340 contribute to the 3',5'-cyclic AMP site.

It belongs to the cAMP-dependent kinase regulatory chain family. Tetramer, composed of 2 regulatory (R) and 2 catalytic (C) subunits. In the presence of cAMP it dissociates into 2 active monomeric C subunits and an R dimer.

This is cAMP-dependent protein kinase regulatory subunit (PKAR) from Colletotrichum orbiculare (strain 104-T / ATCC 96160 / CBS 514.97 / LARS 414 / MAFF 240422) (Cucumber anthracnose fungus).